We begin with the raw amino-acid sequence, 250 residues long: Large ribosomal subunit protein uL29m (250 aa).

A mitochondrion-targeting transit peptide spans 1–24; that stretch reads MRPGAASIRTTGSVLAFLVPSAQC. The segment at 66–86 is disordered; that stretch reads VLSKKGSGDQPPKPVPITEKV.

It belongs to the universal ribosomal protein uL29 family. As to quaternary structure, component of the mitochondrial large ribosomal subunit. Mature mitochondrial ribosomes consist of a small (37S) and a large (54S) subunit. The 37S subunit contains at least 33 different proteins and 1 molecule of RNA (15S). The 54S subunit contains at least 45 different proteins and 1 molecule of RNA (21S).

It is found in the mitochondrion. In Phaeosphaeria nodorum (strain SN15 / ATCC MYA-4574 / FGSC 10173) (Glume blotch fungus), this protein is Large ribosomal subunit protein uL29m (MRPL4).